A 356-amino-acid chain; its full sequence is UDP-N-acetylglucosamine--N-acetylmuramyl-(pentapeptide) pyrophosphoryl-undecaprenol N-acetylglucosamine transferase (356 aa).

UDP-N-acetyl-alpha-D-glucosamine-binding positions include 12 to 14, N124, R163, S188, I242, and Q287; that span reads TGG.

The protein belongs to the glycosyltransferase 28 family. MurG subfamily.

It localises to the cell inner membrane. It catalyses the reaction di-trans,octa-cis-undecaprenyl diphospho-N-acetyl-alpha-D-muramoyl-L-alanyl-D-glutamyl-meso-2,6-diaminopimeloyl-D-alanyl-D-alanine + UDP-N-acetyl-alpha-D-glucosamine = di-trans,octa-cis-undecaprenyl diphospho-[N-acetyl-alpha-D-glucosaminyl-(1-&gt;4)]-N-acetyl-alpha-D-muramoyl-L-alanyl-D-glutamyl-meso-2,6-diaminopimeloyl-D-alanyl-D-alanine + UDP + H(+). It participates in cell wall biogenesis; peptidoglycan biosynthesis. Cell wall formation. Catalyzes the transfer of a GlcNAc subunit on undecaprenyl-pyrophosphoryl-MurNAc-pentapeptide (lipid intermediate I) to form undecaprenyl-pyrophosphoryl-MurNAc-(pentapeptide)GlcNAc (lipid intermediate II). This Pseudomonas fluorescens (strain Pf0-1) protein is UDP-N-acetylglucosamine--N-acetylmuramyl-(pentapeptide) pyrophosphoryl-undecaprenol N-acetylglucosamine transferase.